Reading from the N-terminus, the 541-residue chain is Protein panoramix (541 aa).

The segment at 1 to 169 (MEAPMKLEVK…TLVPDEQQSF (169 aa)) is interaction with Piwi. Disordered stretches follow at residues 52-75 (SDPE…LQPS) and 198-281 (TAEN…TELD). Positions 194–216 (MLEMTAENRKVKHKKKKHKKERS) form a coiled coil. A compositionally biased stretch (basic residues) spans 203–220 (KVKHKKKKHKKERSHRSN). Composition is skewed to basic and acidic residues over residues 241 to 251 (DDKNQFDCDYR) and 269 to 279 (SSKERKLRDTE). Residues 315–343 (LSKADKRSLAVARAELVLEQIQQKANKEE) form a nxf2-interacting region (NIR) region. The stretch at 323 to 343 (LAVARAELVLEQIQQKANKEE) forms a coiled coil. The necessary for interaction with nxf2 and protein stability stretch occupies residues 387-446 (TPGTRIDLSKWGLETVPEATKRLLRLLGIDVARLKELQSTVKPSQRILKLKKEQLEQGLA).

In the ovaries, part of a complex composed of at least Panx, nxf2, piwi and Nxt1. The complex is knowns as Panx-induced cotranscriptional silencing (PICTS) complex, Panx-nxf2-dependent TAP/p15 silencing (Pandas complex), SFiNX (silencing factor interacting nuclear export variant) or piwi-Panx-nxf2-p15 (PPNP) complex. Interacts (via NIR region) with nxf2 (via TAP-C domain); the interaction is direct. Expressed in female gonads (at protein level).

Its subcellular location is the nucleus. In terms of biological role, acts via the piwi-interacting RNA (piRNA) pathway which mediates the repression of transposable elements during meiosis by forming complexes composed of piRNAs and piwi proteins and governs the methylation and subsequent repression of transposons. Required for transcriptional silencing of transposons targeted by piwi and confers its effects by interacting with nascent RNA transcripts. Likely to be recruited to nascent transcripts cotranscriptionally by piwi and to recruit additional factors involved in transcriptional silencing. In the ovaries, forms a complex with nxf2, piwi and Nxt1 which acts as effectors of cotranscriptional transposon silencing. The interaction with nxf2 stabilizes the nuclear protein complex. This is Protein panoramix from Drosophila melanogaster (Fruit fly).